A 185-amino-acid polypeptide reads, in one-letter code: Biofilm operon icaADBC HTH-type negative transcriptional regulator IcaR (185 aa).

The HTH tetR-type domain maps to 1 to 59 (MKDKIIDNAITLFSEKGYDGTTLDDISKSVNIKKASLYYHYDNKEEIYRKSVENCFNYF). The H-T-H motif DNA-binding region spans 22–41 (TLDDISKSVNIKKASLYYHY).

As to quaternary structure, homodimer.

Functionally, represses transcription of the icaADBC operon necessary for biofilm production. This is Biofilm operon icaADBC HTH-type negative transcriptional regulator IcaR (icaR) from Staphylococcus epidermidis (strain ATCC 35984 / DSM 28319 / BCRC 17069 / CCUG 31568 / BM 3577 / RP62A).